The primary structure comprises 375 residues: Decapping and exoribonuclease protein Rai1 (375 aa).

Residues Arg43 and 120-122 each bind substrate; that span reads LRG. Positions 180, 222, 224, 247, and 248 each coordinate Mg(2+). Glu222 is a binding site for substrate. Positions 249 and 274 each coordinate substrate.

This sequence belongs to the DXO/Dom3Z family. In terms of assembly, interacts with Rat1. Mg(2+) serves as cofactor.

The enzyme catalyses a 5'-end triphospho-ribonucleoside in mRNA + H2O = a 5'-end phospho-ribonucleoside in mRNA + diphosphate + H(+). It carries out the reaction a 5'-end NAD(+)-phospho-ribonucleoside in mRNA + H2O = a 5'-end phospho-ribonucleoside in mRNA + NAD(+) + H(+). The catalysed reaction is a 5'-end (N(7)-methyl 5'-triphosphoguanosine)-ribonucleoside-ribonucleotide in mRNA + H2O = a (N(7)-methyl 5'-triphosphoguanosine)-nucleoside + a 5'-end phospho-ribonucleoside in mRNA + H(+). Its function is as follows. Decapping enzyme for NAD-capped RNAs: specifically hydrolyzes the nicotinamide adenine dinucleotide (NAD) cap from a subset of RNAs by removing the entire NAD moiety from the 5'-end of an NAD-capped RNA. The NAD-cap is present at the 5'-end of some RNAs and snoRNAs. In contrast to the canonical 5'-end N7 methylguanosine (m7G) cap, the NAD cap promotes mRNA decay. Also acts as a non-canonical decapping enzyme that removes the entire cap structure of m7G capped or incompletely capped RNAs and mediates their subsequent degradation. Specifically degrades pre-mRNAs with a defective 5'-end m7G cap and is part of a pre-mRNA capping quality control. Possesses 5'-pyrophosphohydrolase activity, hydrolyzing the 5'-end triphosphate to release pyrophosphates, and 5'-3' exonuclease activity. May be involved in RNA degradation in the nucleus. The protein is Decapping and exoribonuclease protein Rai1 of Drosophila melanogaster (Fruit fly).